A 142-amino-acid polypeptide reads, in one-letter code: Large ribosomal subunit protein uL13 (142 aa).

The protein belongs to the universal ribosomal protein uL13 family. Part of the 50S ribosomal subunit.

Its function is as follows. This protein is one of the early assembly proteins of the 50S ribosomal subunit, although it is not seen to bind rRNA by itself. It is important during the early stages of 50S assembly. This is Large ribosomal subunit protein uL13 from Helicobacter hepaticus (strain ATCC 51449 / 3B1).